A 160-amino-acid chain; its full sequence is UPF0178 protein XC_1827 (160 aa).

It belongs to the UPF0178 family.

The sequence is that of UPF0178 protein XC_1827 from Xanthomonas campestris pv. campestris (strain 8004).